Consider the following 160-residue polypeptide: Protein-export protein SecB (160 aa).

This sequence belongs to the SecB family. As to quaternary structure, homotetramer, a dimer of dimers. One homotetramer interacts with 1 SecA dimer.

The protein resides in the cytoplasm. Its function is as follows. One of the proteins required for the normal export of preproteins out of the cell cytoplasm. It is a molecular chaperone that binds to a subset of precursor proteins, maintaining them in a translocation-competent state. It also specifically binds to its receptor SecA. The polypeptide is Protein-export protein SecB (Rhodospirillum rubrum (strain ATCC 11170 / ATH 1.1.1 / DSM 467 / LMG 4362 / NCIMB 8255 / S1)).